Consider the following 161-residue polypeptide: Putative 2'-deoxynucleoside 5'-phosphate N-hydrolase 1 (161 aa).

Residues 27 to 33 (FLSGSIR), tyrosine 42, histidine 60, glutamate 106, and 128 to 130 (SSM) each bind substrate.

This sequence belongs to the 2'-deoxynucleoside 5'-phosphate N-hydrolase 1 family. Monomer and homodimer.

The catalysed reaction is a pyrimidine 2'-deoxyribonucleoside 5'-phosphate + H2O = a pyrimidine nucleobase + 2-deoxy-D-ribose 5-phosphate. The enzyme catalyses a purine 2'-deoxyribonucleoside 5'-phosphate + H2O = a purine nucleobase + 2-deoxy-D-ribose 5-phosphate. In terms of biological role, catalyzes the cleavage of the N-glycosidic bond of deoxyribonucleoside 5'-monophosphates to yield deoxyribose 5-phosphate and a purine or pyrimidine base. The protein is Putative 2'-deoxynucleoside 5'-phosphate N-hydrolase 1 of Methanosarcina mazei (strain ATCC BAA-159 / DSM 3647 / Goe1 / Go1 / JCM 11833 / OCM 88) (Methanosarcina frisia).